Consider the following 214-residue polypeptide: Probable nicotinate-nucleotide adenylyltransferase (214 aa).

The protein belongs to the NadD family.

It carries out the reaction nicotinate beta-D-ribonucleotide + ATP + H(+) = deamido-NAD(+) + diphosphate. Its pathway is cofactor biosynthesis; NAD(+) biosynthesis; deamido-NAD(+) from nicotinate D-ribonucleotide: step 1/1. In terms of biological role, catalyzes the reversible adenylation of nicotinate mononucleotide (NaMN) to nicotinic acid adenine dinucleotide (NaAD). This is Probable nicotinate-nucleotide adenylyltransferase from Mycolicibacterium vanbaalenii (strain DSM 7251 / JCM 13017 / BCRC 16820 / KCTC 9966 / NRRL B-24157 / PYR-1) (Mycobacterium vanbaalenii).